Here is a 62-residue protein sequence, read N- to C-terminus: Large ribosomal subunit protein uL29 (62 aa).

It belongs to the universal ribosomal protein uL29 family.

This Oleidesulfovibrio alaskensis (strain ATCC BAA-1058 / DSM 17464 / G20) (Desulfovibrio alaskensis) protein is Large ribosomal subunit protein uL29.